The primary structure comprises 78 residues: Acyl carrier protein (78 aa).

The Carrier domain occupies 2 to 77 (DELFLRMRAL…DAYEFIKSKV (76 aa)). Ser-37 bears the O-(pantetheine 4'-phosphoryl)serine mark.

It belongs to the acyl carrier protein (ACP) family. 4'-phosphopantetheine is transferred from CoA to a specific serine of apo-ACP by AcpS. This modification is essential for activity because fatty acids are bound in thioester linkage to the sulfhydryl of the prosthetic group.

The protein resides in the cytoplasm. Its pathway is lipid metabolism; fatty acid biosynthesis. Its function is as follows. Carrier of the growing fatty acid chain in fatty acid biosynthesis. The chain is Acyl carrier protein from Treponema pallidum (strain Nichols).